Reading from the N-terminus, the 119-residue chain is MSDLIMKIEAQQKAENPPVFRVGDTVKVHFKIVEGKTERIQVYEGLVICFKNSGIGRTFTVRKNSYGVGVERVFPLHSPRIAKVEVVRPGKVRRAKLYYIRDKVGKAAKIKTLITKKNS.

It belongs to the bacterial ribosomal protein bL19 family.

Its function is as follows. This protein is located at the 30S-50S ribosomal subunit interface and may play a role in the structure and function of the aminoacyl-tRNA binding site. This is Large ribosomal subunit protein bL19 from Treponema denticola (strain ATCC 35405 / DSM 14222 / CIP 103919 / JCM 8153 / KCTC 15104).